A 395-amino-acid chain; its full sequence is Ribosomal RNA large subunit methyltransferase G (395 aa).

It belongs to the methyltransferase superfamily. RlmG family.

The protein resides in the cytoplasm. It catalyses the reaction guanosine(1835) in 23S rRNA + S-adenosyl-L-methionine = N(2)-methylguanosine(1835) in 23S rRNA + S-adenosyl-L-homocysteine + H(+). Its function is as follows. Specifically methylates the guanine in position 1835 (m2G1835) of 23S rRNA. In Yersinia pestis (strain Pestoides F), this protein is Ribosomal RNA large subunit methyltransferase G.